Reading from the N-terminus, the 224-residue chain is Transposase for insertion sequence element IS257 in transposon Tn4003 (224 aa).

The segment at residues Glu33–Gln52 is a DNA-binding region (H-T-H motif). Residues Trp73–Leu222 enclose the Integrase catalytic domain.

Functionally, involved in the transposition of the insertion sequence. In Staphylococcus aureus, this protein is Transposase for insertion sequence element IS257 in transposon Tn4003.